The primary structure comprises 61 residues: Photosystem II reaction center protein K (61 aa).

A propeptide spanning residues 1–24 (MLNILNLICICLNFALYSSSFFFT) is cleaved from the precursor. A helical transmembrane segment spans residues 40–60 (MPVIPLFFFLLAFVWQAAVSF).

The protein belongs to the PsbK family. As to quaternary structure, PSII is composed of 1 copy each of membrane proteins PsbA, PsbB, PsbC, PsbD, PsbE, PsbF, PsbH, PsbI, PsbJ, PsbK, PsbL, PsbM, PsbT, PsbX, PsbY, PsbZ, Psb30/Ycf12, at least 3 peripheral proteins of the oxygen-evolving complex and a large number of cofactors. It forms dimeric complexes.

Its subcellular location is the plastid. The protein localises to the chloroplast thylakoid membrane. One of the components of the core complex of photosystem II (PSII). PSII is a light-driven water:plastoquinone oxidoreductase that uses light energy to abstract electrons from H(2)O, generating O(2) and a proton gradient subsequently used for ATP formation. It consists of a core antenna complex that captures photons, and an electron transfer chain that converts photonic excitation into a charge separation. This Populus alba (White poplar) protein is Photosystem II reaction center protein K.